A 346-amino-acid chain; its full sequence is D-alanine--D-alanine ligase (346 aa).

The 194-residue stretch at 133–326 (KFLAQKAGVK…LANSLPKERE (194 aa)) folds into the ATP-grasp domain. 159–209 (YPIILKPARLGSSIGVSVVHDDSELAYAKDVAFEFDKDVLVEPFIKGVKEY) provides a ligand contact to ATP. Positions 282, 294, and 296 each coordinate Mg(2+).

It belongs to the D-alanine--D-alanine ligase family. It depends on Mg(2+) as a cofactor. Requires Mn(2+) as cofactor.

The protein localises to the cytoplasm. It carries out the reaction 2 D-alanine + ATP = D-alanyl-D-alanine + ADP + phosphate + H(+). Its pathway is cell wall biogenesis; peptidoglycan biosynthesis. Functionally, cell wall formation. The sequence is that of D-alanine--D-alanine ligase from Campylobacter concisus (strain 13826).